The following is a 91-amino-acid chain: Cell division protein FtsB (91 aa).

Topologically, residues 1–3 are cytoplasmic; that stretch reads MRW. Residues 4–21 form a helical membrane-spanning segment; that stretch reads PVIILAVLVVVLQYPLWL. At 22–91 the chain is on the periplasmic side; that stretch reads GKGGWLRVWE…EIFVQVPQKH (70 aa). Residues 28 to 72 adopt a coiled-coil conformation; it reads RVWEVDRKLHEQREENTRLEERNAGLDAEVRDLKSGNEAIEERAR.

This sequence belongs to the FtsB family. In terms of assembly, part of a complex composed of FtsB, FtsL and FtsQ.

Its subcellular location is the cell inner membrane. In terms of biological role, essential cell division protein. May link together the upstream cell division proteins, which are predominantly cytoplasmic, with the downstream cell division proteins, which are predominantly periplasmic. In Azoarcus sp. (strain BH72), this protein is Cell division protein FtsB.